The following is a 166-amino-acid chain: Small ribosomal subunit protein uS5 (166 aa).

One can recognise an S5 DRBM domain in the interval 11 to 74 (LIDKVVHISR…ESAKRTMFEV (64 aa)).

Belongs to the universal ribosomal protein uS5 family. In terms of assembly, part of the 30S ribosomal subunit. Contacts proteins S4 and S8.

In terms of biological role, with S4 and S12 plays an important role in translational accuracy. Functionally, located at the back of the 30S subunit body where it stabilizes the conformation of the head with respect to the body. The sequence is that of Small ribosomal subunit protein uS5 from Syntrophobacter fumaroxidans (strain DSM 10017 / MPOB).